The chain runs to 84 residues: RNA-binding protein Hfq (84 aa).

Residues 9–69 (DRFLNILRTN…VSTIMPESFV (61 aa)) enclose the Sm domain.

The protein belongs to the Hfq family. As to quaternary structure, homohexamer.

RNA chaperone that binds small regulatory RNA (sRNAs) and mRNAs to facilitate mRNA translational regulation in response to envelope stress, environmental stress and changes in metabolite concentrations. Also binds with high specificity to tRNAs. This chain is RNA-binding protein Hfq, found in Thermosipho africanus (strain TCF52B).